The sequence spans 215 residues: Peptidyl-tRNA hydrolase (215 aa).

A tRNA-binding site is contributed by Y35. H40 serves as the catalytic Proton acceptor. Positions 86, 88, and 134 each coordinate tRNA.

This sequence belongs to the PTH family. In terms of assembly, monomer.

The protein localises to the cytoplasm. It catalyses the reaction an N-acyl-L-alpha-aminoacyl-tRNA + H2O = an N-acyl-L-amino acid + a tRNA + H(+). Hydrolyzes ribosome-free peptidyl-tRNAs (with 1 or more amino acids incorporated), which drop off the ribosome during protein synthesis, or as a result of ribosome stalling. Functionally, catalyzes the release of premature peptidyl moieties from peptidyl-tRNA molecules trapped in stalled 50S ribosomal subunits, and thus maintains levels of free tRNAs and 50S ribosomes. This Bordetella parapertussis (strain 12822 / ATCC BAA-587 / NCTC 13253) protein is Peptidyl-tRNA hydrolase.